Reading from the N-terminus, the 637-residue chain is Phospholipase B (637 aa).

An N-terminal signal peptide occupies residues 1-19 (MSIITTAFALSLLATTAFA). In terms of domain architecture, PLA2c spans 46-572 (DCPSNVTWIR…DTWCWAGDDN (527 aa)). Residues Asn50, Asn56, Asn122, Asn231, Asn246, Asn272, Asn314, Asn343, Asn387, Asn433, Asn481, Asn501, Asn528, Asn553, Asn572, Asn594, and Asn606 are each glycosylated (N-linked (GlcNAc...) asparagine).

Belongs to the lysophospholipase family. In terms of processing, N-glycosylated.

It localises to the secreted. It carries out the reaction a 1-acyl-sn-glycero-3-phosphocholine + H2O = sn-glycerol 3-phosphocholine + a fatty acid + H(+). Its function is as follows. Exhibits phospholipase B (PLB), lysophospholipase (LPL) and lysophospholipase/transacylase (LPTA) activities. The protein is Phospholipase B (PLB1) of Cryptococcus neoformans var. neoformans serotype D (strain B-3501A) (Filobasidiella neoformans).